Here is a 774-residue protein sequence, read N- to C-terminus: Lysyl oxidase homolog 2 (774 aa).

Residues 1-25 (MERPLCSHLCSCLAMLALLSPLSLA) form the signal peptide. 4 SRCR domains span residues 58–159 (LRLA…VVCS), 188–302 (IRAI…VSCV), 326–425 (VRLR…VRCN), and 435–544 (LRLN…VACS). 9 disulfides stabilise this stretch: cysteine 84–cysteine 148, cysteine 97–cysteine 158, cysteine 128–cysteine 138, cysteine 218–cysteine 291, cysteine 231–cysteine 301, cysteine 265–cysteine 275, cysteine 351–cysteine 414, cysteine 364–cysteine 424, and cysteine 395–cysteine 405. N-linked (GlcNAc...) asparagine glycosylation occurs at asparagine 288. A glycan (N-linked (GlcNAc...) (complex) asparagine) is linked at asparagine 455. Intrachain disulfides connect cysteine 464–cysteine 530, cysteine 477–cysteine 543, and cysteine 511–cysteine 521. A lysyl-oxidase like region spans residues 548–751 (PDLVLNAEMV…WMYNCHIGGS (204 aa)). Ca(2+)-binding residues include aspartate 549 and leucine 550. Intrachain disulfides connect cysteine 573–cysteine 625, cysteine 579–cysteine 695, cysteine 657–cysteine 673, and cysteine 663–cysteine 685. The Cu cation site is built by histidine 626, histidine 628, and histidine 630. N-linked (GlcNAc...) (complex) asparagine glycosylation occurs at asparagine 644. The segment at residues 653–689 (KASFCLEDTECEGDIQKNYECANFGDQGITMGCWDMY) is a cross-link (lysine tyrosylquinone (Lys-Tyr)). Tyrosine 689 carries the post-translational modification 2',4',5'-topaquinone. Ca(2+)-binding residues include glutamate 722, aspartate 724, asparagine 727, and asparagine 728. A disulfide bridge links cysteine 732 with cysteine 746.

The protein belongs to the lysyl oxidase family. Component of some chromatin repressor complex. Interacts with SNAI1. Interacts with TAF10. Interacts with HSPA5. Interacts with EFEMP2. Cu cation is required as a cofactor. The cofactor is lysine tyrosylquinone residue. Post-translationally, the lysine tyrosylquinone cross-link (LTQ) is generated by condensation of the epsilon-amino group of a lysine with a topaquinone produced by oxidation of tyrosine. N-glycosylated. N-glycosylation on Asn-455 and Asn-644 may be essential for proper folding and secretion; may be composed of a fucosylated carbohydrates attached to a trimannose N-linked glycan core. As to expression, expressed in many tissues. Highest expression in reproductive tissues, placenta, uterus and prostate. In esophageal epithelium, expressed in the basal, prickle and granular cell layers. Up-regulated in a number of cancers cells and tissues.

It localises to the secreted. The protein resides in the extracellular space. It is found in the extracellular matrix. The protein localises to the basement membrane. Its subcellular location is the nucleus. It localises to the chromosome. The protein resides in the endoplasmic reticulum. It carries out the reaction L-lysyl-[protein] + O2 + H2O = (S)-2-amino-6-oxohexanoyl-[protein] + H2O2 + NH4(+). Its activity is regulated as follows. According to some reports, it is inhibited by beta-aminopropionitrile (BAPN). According to another report, it is not inhibited by beta-aminopropionitrile (BAPN). Specifically inhibited by a mouse monoclonal antibody AB0023, inhibition occurs in a non-competitive manner. In terms of biological role, mediates the post-translational oxidative deamination of lysine residues on target proteins leading to the formation of deaminated lysine (allysine). Acts as a transcription corepressor and specifically mediates deamination of trimethylated 'Lys-4' of histone H3 (H3K4me3), a specific tag for epigenetic transcriptional activation. Shows no activity against histone H3 when it is trimethylated on 'Lys-9' (H3K9me3) or 'Lys-27' (H3K27me3) or when 'Lys-4' is monomethylated (H3K4me1) or dimethylated (H3K4me2). Also mediates deamination of methylated TAF10, a member of the transcription factor IID (TFIID) complex, which induces release of TAF10 from promoters, leading to inhibition of TFIID-dependent transcription. LOXL2-mediated deamination of TAF10 results in transcriptional repression of genes required for embryonic stem cell pluripotency including POU5F1/OCT4, NANOG, KLF4 and SOX2. Involved in epithelial to mesenchymal transition (EMT) via interaction with SNAI1 and participates in repression of E-cadherin CDH1, probably by mediating deamination of histone H3. During EMT, involved with SNAI1 in negatively regulating pericentromeric heterochromatin transcription. SNAI1 recruits LOXL2 to pericentromeric regions to oxidize histone H3 and repress transcription which leads to release of heterochromatin component CBX5/HP1A, enabling chromatin reorganization and acquisition of mesenchymal traits. Interacts with the endoplasmic reticulum protein HSPA5 which activates the IRE1-XBP1 pathway of the unfolded protein response, leading to expression of several transcription factors involved in EMT and subsequent EMT induction. Involved in E-cadherin repression following hypoxia, a hallmark of EMT believed to amplify tumor aggressiveness, suggesting that it may play a role in tumor progression. When secreted into the extracellular matrix, promotes cross-linking of extracellular matrix proteins by mediating oxidative deamination of peptidyl lysine residues in precursors to fibrous collagen and elastin. Acts as a regulator of sprouting angiogenesis, probably via collagen IV scaffolding. Acts as a regulator of chondrocyte differentiation, probably by regulating expression of factors that control chondrocyte differentiation. This is Lysyl oxidase homolog 2 (LOXL2) from Homo sapiens (Human).